Here is a 255-residue protein sequence, read N- to C-terminus: Putative cysteine-rich repeat secretory protein 10 (255 aa).

A signal peptide spans 1 to 26; the sequence is MFSSSVSISILVVVAMQFSFIHNVLS. 2 consecutive Gnk2-homologous domains span residues 33–134 and 140–252; these read YLQH…EIYT and FKHY…LYPF.

It belongs to the cysteine-rich repeat secretory protein family.

It is found in the secreted. The chain is Putative cysteine-rich repeat secretory protein 10 (CRRSP10) from Arabidopsis thaliana (Mouse-ear cress).